The chain runs to 376 residues: PqqA peptide cyclase (376 aa).

The region spanning 7 to 222 is the Radical SAM core domain; that stretch reads VGLPLWLLAE…TNEYRDKLKA (216 aa). Residues Cys21, Cys25, and Cys28 each coordinate [4Fe-4S] cluster.

The protein belongs to the radical SAM superfamily. PqqE family. In terms of assembly, interacts with PqqD. The interaction is necessary for activity of PqqE. The cofactor is [4Fe-4S] cluster.

The enzyme catalyses [PQQ precursor protein] + S-adenosyl-L-methionine = E-Y cross-linked-[PQQ precursor protein] + 5'-deoxyadenosine + L-methionine + H(+). It participates in cofactor biosynthesis; pyrroloquinoline quinone biosynthesis. Catalyzes the cross-linking of a glutamate residue and a tyrosine residue in the PqqA protein as part of the biosynthesis of pyrroloquinoline quinone (PQQ). This is PqqA peptide cyclase from Pseudomonas putida (strain ATCC 47054 / DSM 6125 / CFBP 8728 / NCIMB 11950 / KT2440).